The chain runs to 377 residues: Gibberellin 20 oxidase 1 (377 aa).

The Fe2OG dioxygenase domain occupies 222–322 (ENDSIMRLNY…RKSLAFFLCP (101 aa)). 3 residues coordinate Fe cation: His-247, Asp-249, and His-303. Residue Arg-313 is part of the active site.

Belongs to the iron/ascorbate-dependent oxidoreductase family. GA20OX subfamily. Requires Fe(2+) as cofactor. L-ascorbate serves as cofactor. As to expression, highly expressed in stems and inflorescence tissues. Detected in seeds, roots, leaves and siliques.

The enzyme catalyses gibberellin A12 + 2 2-oxoglutarate + 3 O2 + H(+) = gibberellin A9 + 2 succinate + 3 CO2 + 2 H2O. It catalyses the reaction gibberellin A12 + 2-oxoglutarate + O2 = gibberellin A15 + succinate + CO2. It carries out the reaction gibberellin A15 + 2-oxoglutarate + O2 = gibberellin A24 + succinate + CO2 + H2O. The catalysed reaction is gibberellin A53 + 2-oxoglutarate + O2 = gibberellin A44 + succinate + CO2. The protein operates within plant hormone biosynthesis; gibberellin biosynthesis. In terms of biological role, key oxidase enzyme in the biosynthesis of gibberellin that catalyzes the conversion of GA12 to GA9, via a three-step oxidation at C-20 of the GA skeleton. GA53 is less effectively oxidized than GA12 and is only oxidized one step to GA44. Involved in the promotion of the floral transition, fertility and silique elongation, but plays only a minor role in elongation of seedling organs. Acts redundantly with GA20OX2. The chain is Gibberellin 20 oxidase 1 (GA20OX1) from Arabidopsis thaliana (Mouse-ear cress).